The primary structure comprises 4421 residues: Replicase polyprotein 1a (4421 aa).

The 121-residue stretch at 54–174 (YDNHVKIDCR…HKWFQFCRLY (121 aa)) folds into the CoV Nsp1 globular domain. Residues 192–222 (FSVEAAYAEVHAEPKGKYSQKAYALLRQYRG) form the BetaCoV Nsp1 C-terminal domain. One can recognise a CoV Nsp2 N-terminal domain in the interval 226 to 488 (VLFVDQYGCD…LITHALYLDY (263 aa)). Residues Cys365, Cys370, Cys386, and Cys389 each coordinate Zn(2+). The interval 365-389 (CFNDNCDFYGWVSGNMMDGFSCPLC) is C4. Residues 493–681 (CGNLEQNHIL…VNKFYTFFKL (189 aa)) form the CoV Nsp2 middle domain. One can recognise a CoV Nsp2 C-terminal domain in the interval 697–809 (LKTINGLVCI…LDHAWRFPCA (113 aa)). A Ubiquitin-like 1 domain is found at 811–923 (RKVNFNEKPV…MYCTFAIEDV (113 aa)). Tandem repeats lie at residues 945-954 (NDDEDVVTGD), 955-964 (NDDEDVVTGD), 965-974 (NDDEDVVTGD), 975-984 (NDDEDVVTGD), 985-994 (NDDEDVVTGD), 995-1004 (NDDEDVVTGD), 1005-1014 (NDDEDVVTGD), 1015-1024 (NDDEDVVTGD), and 1025-1034 (NNDEDVVTGD). A 9 X 10 AA tandem repeat of N-[DN]-D-E-D-V-V-T-G-D region spans residues 945 to 1034 (NDDEDVVTGD…NNDEDVVTGD (90 aa)). The tract at residues 947-1042 (DEDVVTGDND…GDNNDEESVT (96 aa)) is disordered. Positions 1073–1323 (VFNDVYNDAL…VCFVKGDIIN (251 aa)) constitute a Peptidase C16 1 domain. Cys1111 acts as the For PL1-PRO activity in catalysis. Zn(2+)-binding residues include Cys1188, Cys1191, Cys1214, and Cys1216. The C4-type 1 zinc-finger motif lies at 1188-1216 (CLKCGFSFDLNGLDAVFFYGDIVSHVCKC). Residues His1262 and Asp1273 each act as for PL1-PRO activity in the active site. Residues 1301–1472 (ELAQLYGLCI…IIQKCQITSV (172 aa)) enclose the Macro domain. The DPUP domain maps to 1528–1599 (NDVRDYLLSK…TVNQVCVLLA (72 aa)). Positions 1599 to 1654 (AKKIDVLLTVDGVNFKSISLTVGEVFGKILGNVFCDGIDVTKLKCSDFYADKILYQ) constitute a Ubiquitin-like 2 domain. Residues 1668-1928 (SSFGFDQQQL…MVAYNPDLSQ (261 aa)) enclose the Peptidase C16 2 domain. Catalysis depends on Cys1707, which acts as the For PL2-PRO activity. Cys1785, Cys1787, Cys1819, and Cys1821 together coordinate Zn(2+). Residues 1785-1821 (CDCGIKQESRVGVDAVMHFGTLAKTDLFNGYKIGCNC) form a C4-type 2 zinc finger. Catalysis depends on for PL2-PRO activity residues His1864 and Asp1878. The region spanning 1942–2043 (IKAQFKPFAK…TYFNKPSFKS (102 aa)) is the Nucleic acid-binding domain. One can recognise a G2M domain in the interval 2058 to 2207 (ESQGNVVTSV…NDKTIFYTTE (150 aa)). 3 helical membrane passes run 2176 to 2196 (AIEF…LLHF), 2237 to 2257 (FLVV…NVIF), and 2268 to 2288 (FPIF…LVTI). Residues 2176–2413 (AIEFYGFLKW…FVLLRFYIVV (238 aa)) are HD1. The 3Ecto domain occupies 2273–2334 (GRIVMWIKAT…AIDFVQYEVD (62 aa)). Disulfide bonds link Cys2289–Cys2313 and Cys2304–Cys2310. The next 2 helical transmembrane spans lie at 2351 to 2371 (LVIG…LIGL) and 2393 to 2413 (FIVF…YIVV). Residues 2421 to 2511 (GFIRHIVYGC…ELKRPVNPTD (91 aa)) form a Y1 region. The region spanning 2421 to 2788 (GFIRHIVYGC…LTTPFSLKGG (368 aa)) is the CoV Nsp3 Y domain. Zn(2+)-binding residues include His2425, Cys2430, Cys2435, Cys2438, Cys2471, His2474, Cys2478, and Cys2481. A ZF1 region spans residues 2425–2438 (HIVYGCNKAGCLFC). The segment at 2471–2481 (CVKHQWNCFNC) is ZF2. The Y2 stretch occupies residues 2512 to 2604 (ASHYVVTDIK…LVDKKLITTA (93 aa)). The coV-Y stretch occupies residues 2512 to 2788 (ASHYVVTDIK…LTTPFSLKGG (277 aa)). The segment at 2605–2687 (CNGISVTQIM…KSMISAVAAG (83 aa)) is Y3. Residues 2688-2788 (LEFTDENYNN…LTTPFSLKGG (101 aa)) are Y4. A run of 5 helical transmembrane segments spans residues 2794 to 2814 (LLYI…ALLP), 3069 to 3089 (ASSI…YYLI), 3101 to 3121 (VVVI…VFQV), 3128 to 3148 (VYAC…SVIM), and 3153 to 3173 (IVMY…AMVI). Residues 2794 to 3173 (LLYILFFISL…FCVTYVAMVI (380 aa)) form an HD2 region. The Nsp4C domain maps to 3187 to 3284 (IGVNVCSDST…TASVSTSFLQ (98 aa)). A Peptidase C30 domain is found at 3285 to 3587 (SGIVKMVSPT…YQQLAGVKLQ (303 aa)). Active-site for 3CL-PRO activity residues include His3325 and Cys3429. Transmembrane regions (helical) follow at residues 3601–3621 (ILIS…WTIF), 3626–3646 (THMI…MLLV), 3651–3671 (FYLT…NYLV), 3694–3714 (FTYV…IFIT), 3722–3742 (IFSL…WYFG), 3750–3770 (LLFI…SLAI), and 3793–3813 (LILL…GFFS). Positions 3601–3813 (ILISTFLFSC…ILSCYWGFFS (213 aa)) are HD3. The region spanning 3875–3963 (SKLTDVKCAN…DYVQDSTVLQ (89 aa)) is the RdRp Nsp7 cofactor domain. One can recognise a RdRp Nsp8 cofactor domain in the interval 3964-4160 (ALQSEFVNMA…YNEVANAVMQ (197 aa)). Positions 4161–4270 (NNELMPHKLK…GTLSSTIRLQ (110 aa)) constitute a Nsp9 ssRNA-binding domain. The ExoN/MTase coactivator domain maps to 4271 to 4408 (AGVATEYAAN…CVGSSVAVQS (138 aa)). Positions 4344, 4347, 4353, 4360, 4386, 4389, 4397, and 4399 each coordinate Zn(2+). Zinc fingers lie at residues 4344-4360 (CIYC…DGIC) and 4386-4399 (CQVC…SCSC).

This sequence belongs to the coronaviruses polyprotein 1ab family. 3CL-PRO exists as monomer and homodimer. Eight copies of nsp7 and eight copies of nsp8 assemble to form a heterohexadecamer. Nsp9 is a dimer. Nsp10 forms a dodecamer. Specific enzymatic cleavages in vivo by its own proteases yield mature proteins. 3CL-PRO and PL-PRO proteinases are autocatalytically processed.

The protein localises to the host membrane. The protein resides in the host cytoplasm. It localises to the host perinuclear region. The enzyme catalyses Thiol-dependent hydrolysis of ester, thioester, amide, peptide and isopeptide bonds formed by the C-terminal Gly of ubiquitin (a 76-residue protein attached to proteins as an intracellular targeting signal).. It catalyses the reaction TSAVLQ-|-SGFRK-NH2 and SGVTFQ-|-GKFKK the two peptides corresponding to the two self-cleavage sites of the SARS 3C-like proteinase are the two most reactive peptide substrates. The enzyme exhibits a strong preference for substrates containing Gln at P1 position and Leu at P2 position.. It carries out the reaction a 5'-end diphospho-ribonucleoside in mRNA + GTP + H(+) = a 5'-end (5'-triphosphoguanosine)-ribonucleoside in mRNA + diphosphate. The papain-like proteinase 1 (PL1-PRO) and papain-like proteinase 2 (PL2-PRO) are responsible for the cleavages located at the N-terminus of the replicase polyprotein. In addition, PLP2 possesses a deubiquitinating/deISGylating activity and processes both 'Lys-48'- and 'Lys-63'-linked polyubiquitin chains from cellular substrates. Antagonizes innate immune induction of type I interferon by blocking the phosphorylation, dimerization and subsequent nuclear translocation of host IRF-3. Functionally, responsible for the majority of cleavages as it cleaves the C-terminus of replicase polyprotein at 11 sites. Recognizes substrates containing the core sequence [ILMVF]-Q-|-[SGACN]. Inhibited by the substrate-analog Cbz-Val-Asn-Ser-Thr-Leu-Gln-CMK. Also contains an ADP-ribose-1''-phosphate (ADRP)-binding function. In terms of biological role, nsp7-nsp8 hexadecamer may possibly confer processivity to the polymerase, maybe by binding to dsRNA or by producing primers utilized by the latter. Its function is as follows. Catalytic subunit of viral RNA capping enzyme which catalyzes the RNA guanylyltransferase reaction for genomic and sub-genomic RNAs. The kinase-like NiRAN domain of NSP12 transfers RNA to the amino terminus of NSP9, forming a covalent RNA-protein intermediate. Subsequently, the NiRAN domain transfers RNA to GDP, forming the core cap structure GpppA-RNA. The NSP14 and NSP16 methyltransferases then add methyl groups to form functional cap structures. Binds to the 40S ribosomal subunit and inhibits host translation. The nsp1-40S ribosome complex further induces an endonucleolytic cleavage near the 5'UTR of host mRNAs, targeting them for degradation. By suppressing host gene expression, nsp1 facilitates efficient viral gene expression in infected cells and evasion from host immune response. The protein is Replicase polyprotein 1a of Human coronavirus HKU1 (isolate N5) (HCoV-HKU1).